We begin with the raw amino-acid sequence, 574 residues long: Phosphatidylinositol 4-kinase gamma 3 (574 aa).

Ubiquitin-like domains lie at Pro32–Gln109 and Ala110–Arg188. Positions Gly257–Glu555 constitute a PI3K/PI4K catalytic domain. The segment at Ser263–Gly269 is G-loop. ATP is bound by residues Ser264 to Ala270, Lys286, and Gln381 to Val384. The catalytic loop stretch occupies residues Ala414–Asn422. Residues Pro438–Glu464 form an activation loop region. Asp440 lines the ATP pocket.

Belongs to the PI3/PI4-kinase family. Type II PI4K subfamily.

It carries out the reaction a 1,2-diacyl-sn-glycero-3-phospho-(1D-myo-inositol) + ATP = a 1,2-diacyl-sn-glycero-3-phospho-(1D-myo-inositol 4-phosphate) + ADP + H(+). In terms of biological role, the phosphorylation of phosphatidylinositol (PI) to PI4P is the first committed step in the generation of phosphatidylinositol 4,5-bisphosphate (PIP2), a precursor of the second messenger inositol 1,4,5-trisphosphate (InsP3). In Arabidopsis thaliana (Mouse-ear cress), this protein is Phosphatidylinositol 4-kinase gamma 3 (PI4KG3).